Consider the following 70-residue polypeptide: Small ribosomal subunit protein bS21 (70 aa).

Belongs to the bacterial ribosomal protein bS21 family.

This Campylobacter jejuni subsp. jejuni serotype O:23/36 (strain 81-176) protein is Small ribosomal subunit protein bS21.